A 173-amino-acid chain; its full sequence is Inner membrane protein YbcI (173 aa).

Over Met-1–Leu-12 the chain is Cytoplasmic. The chain crosses the membrane as a helical span at residues Cys-13 to Ala-35. Over Met-36–Val-54 the chain is Periplasmic. Residues Phe-55 to Ile-77 form a helical membrane-spanning segment. Residues Gly-78–Arg-83 are Cytoplasmic-facing. The helical transmembrane segment at Ala-84–Leu-103 threads the bilayer. The Periplasmic portion of the chain corresponds to Asp-104–His-147. A helical membrane pass occupies residues Gln-148–Trp-170. Topologically, residues Arg-171–Arg-173 are cytoplasmic.

The protein resides in the cell inner membrane. This is Inner membrane protein YbcI (ybcI) from Escherichia coli (strain K12).